Here is a 229-residue protein sequence, read N- to C-terminus: uncharacterized protein (229 aa).

Residues 61 to 229 are disordered; it reads MQAEDKVSKP…TESEDKPKRG (169 aa). Positions 109-128 are enriched in basic and acidic residues; it reads QQEKQQPEKAVVEQQEKQQP. Low complexity predominate over residues 166-194; the sequence is QPEQPERQQQAQPERQQQAQPERQQQAQP. Acidic residues predominate over residues 195-204; sequence EEAEDAEQEP. A compositionally biased stretch (basic and acidic residues) spans 218 to 229; it reads TQTESEDKPKRG.

This is an uncharacterized protein from Frog virus 3 (isolate Goorha) (FV-3).